A 110-amino-acid chain; its full sequence is UPF0339 protein YegP (110 aa).

Repeat copies occupy residues 10–58 (SSDS…RYEK) and 61–109 (ASNG…VKDN).

It belongs to the UPF0339 family. Duplicated subfamily.

The protein is UPF0339 protein YegP (yegP) of Escherichia coli O157:H7.